The sequence spans 539 residues: O-phosphoserine--tRNA(Cys) ligase (539 aa).

Residues 188-190 (HMT), 233-235 (SAS), 275-276 (YY), and Asn327 each bind substrate.

Belongs to the class-II aminoacyl-tRNA synthetase family. O-phosphoseryl-tRNA(Cys) synthetase subfamily. As to quaternary structure, homotetramer. Interacts with SepCysS.

It catalyses the reaction tRNA(Cys) + O-phospho-L-serine + ATP = O-phospho-L-seryl-tRNA(Cys) + AMP + diphosphate. Catalyzes the attachment of O-phosphoserine (Sep) to tRNA(Cys). The protein is O-phosphoserine--tRNA(Cys) ligase of Methanosarcina barkeri (strain Fusaro / DSM 804).